The primary structure comprises 118 residues: Thioredoxin H5 (118 aa).

A2 is subject to N-acetylalanine. Residues 2 to 113 (AGEGEVIACH…INEKLMKHGG (112 aa)) form the Thioredoxin domain. Residues C39 and C42 each act as nucleophile in the active site. Residues C39 and C42 are joined by a disulfide bond.

Belongs to the thioredoxin family. Plant H-type subfamily. Interacts with MDH1.

It is found in the cytoplasm. Functionally, thiol-disulfide oxidoreductase involved in response to pathogens and oxidative stresses. Required for the response to victorin, a phytotoxin which induces programmed cell death in sensitive plants. Possesses insulin disulfide bonds reducing activity. This chain is Thioredoxin H5 (TRX5), found in Arabidopsis thaliana (Mouse-ear cress).